The chain runs to 174 residues: Ubiquitin-fold modifier-conjugating enzyme 1 (174 aa).

Cys119 functions as the Glycyl thioester intermediate in the catalytic mechanism.

This sequence belongs to the ubiquitin-conjugating enzyme family. UFC1 subfamily.

E2-like enzyme which forms an intermediate with UFM1 via a thioester linkage. The protein is Ubiquitin-fold modifier-conjugating enzyme 1 of Arabidopsis thaliana (Mouse-ear cress).